The primary structure comprises 367 residues: tRNA (guanine(26)-N(2))-dimethyltransferase (367 aa).

The region spanning 1-365 (MRVSEGRVTV…ADVVEIREAT (365 aa)) is the Trm1 methyltransferase domain. S-adenosyl-L-methionine is bound by residues Arg-34, Arg-64, Asp-79, Asp-105, and Ala-106. Zn(2+) is bound by residues Cys-234, Cys-237, Cys-254, and Cys-257.

The protein belongs to the class I-like SAM-binding methyltransferase superfamily. Trm1 family.

The catalysed reaction is guanosine(26) in tRNA + 2 S-adenosyl-L-methionine = N(2)-dimethylguanosine(26) in tRNA + 2 S-adenosyl-L-homocysteine + 2 H(+). In terms of biological role, dimethylates a single guanine residue at position 26 of a number of tRNAs using S-adenosyl-L-methionine as donor of the methyl groups. The sequence is that of tRNA (guanine(26)-N(2))-dimethyltransferase from Haloarcula marismortui (strain ATCC 43049 / DSM 3752 / JCM 8966 / VKM B-1809) (Halobacterium marismortui).